The chain runs to 357 residues: Alanine racemase (357 aa).

Catalysis depends on lysine 35, which acts as the Proton acceptor; specific for D-alanine. Residue lysine 35 is modified to N6-(pyridoxal phosphate)lysine. Residue arginine 130 coordinates substrate. Residue tyrosine 255 is the Proton acceptor; specific for L-alanine of the active site. Residue methionine 303 participates in substrate binding.

The protein belongs to the alanine racemase family. Pyridoxal 5'-phosphate serves as cofactor.

The catalysed reaction is L-alanine = D-alanine. It participates in amino-acid biosynthesis; D-alanine biosynthesis; D-alanine from L-alanine: step 1/1. Functionally, catalyzes the interconversion of L-alanine and D-alanine. May also act on other amino acids. This Nitrosospira multiformis (strain ATCC 25196 / NCIMB 11849 / C 71) protein is Alanine racemase (alr).